A 298-amino-acid chain; its full sequence is Aspartate carbamoyltransferase catalytic subunit (298 aa).

2 residues coordinate carbamoyl phosphate: Arg50 and Thr51. Lys79 provides a ligand contact to L-aspartate. 3 residues coordinate carbamoyl phosphate: Arg100, His128, and Gln131. Arg160 and Arg221 together coordinate L-aspartate. Carbamoyl phosphate-binding residues include Leu260 and Pro261.

This sequence belongs to the aspartate/ornithine carbamoyltransferase superfamily. ATCase family. Heterooligomer of catalytic and regulatory chains.

The catalysed reaction is carbamoyl phosphate + L-aspartate = N-carbamoyl-L-aspartate + phosphate + H(+). The protein operates within pyrimidine metabolism; UMP biosynthesis via de novo pathway; (S)-dihydroorotate from bicarbonate: step 2/3. Its function is as follows. Catalyzes the condensation of carbamoyl phosphate and aspartate to form carbamoyl aspartate and inorganic phosphate, the committed step in the de novo pyrimidine nucleotide biosynthesis pathway. The polypeptide is Aspartate carbamoyltransferase catalytic subunit (Methanoculleus marisnigri (strain ATCC 35101 / DSM 1498 / JR1)).